The following is an 88-amino-acid chain: Small ribosomal subunit protein bS20 (88 aa).

The segment at 1–25 is disordered; that stretch reads MANTAQALKRIRQTNKARAQNASQR. Residues 16–25 are compositionally biased toward polar residues; that stretch reads KARAQNASQR.

The protein belongs to the bacterial ribosomal protein bS20 family.

Its function is as follows. Binds directly to 16S ribosomal RNA. The chain is Small ribosomal subunit protein bS20 from Dichelobacter nodosus (strain VCS1703A).